Here is a 953-residue protein sequence, read N- to C-terminus: MNEEYIKVRGAKEHNLKNINVDIPRNKFVVITGLSGSGKSSLAFDTIYAEGQRRYVESLSSYARQFLHLQNKPNVESISGLSPAIAIDQKTTSKNPRSTVGTITEIYDYLRLLYARVGIPYSPVTGLPIHSQTVAEMVDIINELPKGTKVYLLAPIVRGHKGEFRREIINLKKQGFQKLIVNGEVCEIDDLPKLDKNKKHNIEVIVDRIVLDENLGNRLADSLESSLNLADGITYLEIVELPQAVKSQFKKNQRITFSEKYSCPVSGFHLTEIEPRIFSFNSPFGACPKCEGIGKEFFFDRDLIVQDQRISIKDGAIVPWGSTSSKFILETLKALADHYKFSIEVPFISLSQNVKDILFEGSGEEEIKFEFHDGSKTQIIKQPFAGIIPSLQEKDRTIESVLIKEELAKFKSEHKCTACSGFRLKDEALCVKIANLHIGEVAGMSIAALQKWFSHLEEKLNQKQLFIAKRILKEINERLKFLMNVGLDYLTLSREAGTLSGGESQRIRLASQIGSGLSGVLYVLDEPSIGLHQRDNTRLIATLKRLRDLGNTVLVVEHDEETMYEADHIIDIGPGAGIHGGRVIAEGNAEKIKHFEESITGRYLSGRQTIKVPSETRVGHDNRAIELLGAVSNNLDNVDIKIPLGTFTAITGVSGSGKSSLMIHTLYKAALKHLEPTSKVFPGKYRELKGLEYIDKIIDINQSPIGRTPRSNPATYTGAFTHIRDWFVELPESKARGYKVGRFSFNVKGGRCEACQGDGLIKIEMHFLPDVYVKCDICNGHRYNRETLEIKYKGKSIADILMMTVEDAMQFFDKIPLIYEKLITLNEVGLGYIKIGQSATTLSGGEAQRVKLAKELSRRSTGKTLYILDEPTTGLHIDDIKKLLKVLHKLVDMGNTVLVIEHNLDVIKTADYIIDVGPEGGDKGGKIVVCGTPADIAACKESHTGRYLKQYLV.

33–40 serves as a coordination point for ATP; sequence GLSGSGKS. ABC transporter domains are found at residues 320-599 and 619-949; these read WGST…EESI and GHDN…RYLK. 652 to 659 contacts ATP; it reads GVSGSGKS. A C4-type zinc finger spans residues 752–778; the sequence is CEACQGDGLIKIEMHFLPDVYVKCDIC.

It belongs to the ABC transporter superfamily. UvrA family. Forms a heterotetramer with UvrB during the search for lesions.

The protein resides in the cytoplasm. The UvrABC repair system catalyzes the recognition and processing of DNA lesions. UvrA is an ATPase and a DNA-binding protein. A damage recognition complex composed of 2 UvrA and 2 UvrB subunits scans DNA for abnormalities. When the presence of a lesion has been verified by UvrB, the UvrA molecules dissociate. The sequence is that of UvrABC system protein A from Rickettsia typhi (strain ATCC VR-144 / Wilmington).